A 297-amino-acid chain; its full sequence is Alpha-tubulin N-acetyltransferase 1 (297 aa).

Residues 1-184 (MDFPYDLNAL…NNFVVFAGFF (184 aa)) enclose the N-acetyltransferase domain. Residues 118–131 (FYVT…GYGS) and 154–163 (SPKFLSFLEK) each bind acetyl-CoA. Residues 226–297 (FVRPGGPPHS…SLNRSRLSFH (72 aa)) are disordered. The segment covering 230–240 (GGPPHSPPLLP) has biased composition (pro residues). A compositionally biased stretch (low complexity) spans 241–264 (SSPQSRSLSVGSSPSRAPLRPAAA). 2 stretches are compositionally biased toward polar residues: residues 266 to 278 (VLQQ…SPLN) and 286 to 297 (TSSLNRSRLSFH).

This sequence belongs to the acetyltransferase ATAT1 family. In terms of assembly, monomer.

The protein localises to the cytoplasm. Its subcellular location is the membrane. The protein resides in the clathrin-coated pit. It localises to the cell junction. It is found in the focal adhesion. The protein localises to the cell projection. Its subcellular location is the axon. The protein resides in the cytoskeleton. It localises to the spindle. The catalysed reaction is L-lysyl-[alpha-tubulin] + acetyl-CoA = N(6)-acetyl-L-lysyl-[alpha-tubulin] + CoA + H(+). Its function is as follows. Specifically acetylates 'Lys-40' in alpha-tubulin on the lumenal side of microtubules. Promotes microtubule destabilization and accelerates microtubule dynamics; this activity may be independent of acetylation activity. Acetylates alpha-tubulin with a slow enzymatic rate, due to a catalytic site that is not optimized for acetyl transfer. Enters the microtubule through each end and diffuses quickly throughout the lumen of microtubules. Acetylates only long/old microtubules because of its slow acetylation rate since it does not have time to act on dynamically unstable microtubules before the enzyme is released. May be involved in neuron development. Acetylates alpha-tubulin in neurons, but not in cilia. This chain is Alpha-tubulin N-acetyltransferase 1, found in Danio rerio (Zebrafish).